Consider the following 185-residue polypeptide: Protein GrpE (185 aa).

A compositionally biased stretch (polar residues) spans 1-11 (MENTQENPTDQ). A disordered region spans residues 1–38 (MENTQENPTDQTTEETGREAQAAEPAAQAAENAAPAAE). Residues 19–38 (EAQAAEPAAQAAENAAPAAE) are compositionally biased toward low complexity.

The protein belongs to the GrpE family. In terms of assembly, homodimer.

It localises to the cytoplasm. In terms of biological role, participates actively in the response to hyperosmotic and heat shock by preventing the aggregation of stress-denatured proteins, in association with DnaK and GrpE. It is the nucleotide exchange factor for DnaK and may function as a thermosensor. Unfolded proteins bind initially to DnaJ; upon interaction with the DnaJ-bound protein, DnaK hydrolyzes its bound ATP, resulting in the formation of a stable complex. GrpE releases ADP from DnaK; ATP binding to DnaK triggers the release of the substrate protein, thus completing the reaction cycle. Several rounds of ATP-dependent interactions between DnaJ, DnaK and GrpE are required for fully efficient folding. In Burkholderia mallei (strain NCTC 10247), this protein is Protein GrpE.